The primary structure comprises 33 residues: Cytochrome b6-f complex subunit 7 (33 aa).

The chain crosses the membrane as a helical span at residues 5–25 (IFNTAVITFTLVLVGLGAGYL).

The protein belongs to the PetM family. As to quaternary structure, the 4 large subunits of the cytochrome b6-f complex are cytochrome b6, subunit IV (17 kDa polypeptide, PetD), cytochrome f and the Rieske protein, while the 4 small subunits are PetG, PetL, PetM and PetN. The complex functions as a dimer.

It localises to the cellular thylakoid membrane. Functionally, component of the cytochrome b6-f complex, which mediates electron transfer between photosystem II (PSII) and photosystem I (PSI), cyclic electron flow around PSI, and state transitions. This Thermosynechococcus vestitus (strain NIES-2133 / IAM M-273 / BP-1) protein is Cytochrome b6-f complex subunit 7.